The chain runs to 355 residues: Sesquiterpene synthase-like protein Agr11 (355 aa).

The protein belongs to the terpene synthase family.

This is Sesquiterpene synthase-like protein Agr11 from Cyclocybe aegerita (Black poplar mushroom).